The sequence spans 215 residues: Peptide methionine sulfoxide reductase MsrA (215 aa).

Residue C57 is part of the active site.

This sequence belongs to the MsrA Met sulfoxide reductase family.

The enzyme catalyses L-methionyl-[protein] + [thioredoxin]-disulfide + H2O = L-methionyl-(S)-S-oxide-[protein] + [thioredoxin]-dithiol. The catalysed reaction is [thioredoxin]-disulfide + L-methionine + H2O = L-methionine (S)-S-oxide + [thioredoxin]-dithiol. Functionally, has an important function as a repair enzyme for proteins that have been inactivated by oxidation. Catalyzes the reversible oxidation-reduction of methionine sulfoxide in proteins to methionine. This is Peptide methionine sulfoxide reductase MsrA from Saccharophagus degradans (strain 2-40 / ATCC 43961 / DSM 17024).